A 451-amino-acid chain; its full sequence is Secreted RxLR effector protein 111 (451 aa).

The first 19 residues, 1 to 19 (MRGTLATALLLVASCRIAA), serve as a signal peptide directing secretion. Residues 48–69 (RFLRDNREQRVALALTAANESR) carry the RxLR-dEER motif. N-linked (GlcNAc...) asparagine glycosylation is present at Asn-66. 2 stretches are compositionally biased toward polar residues: residues 175 to 184 (RKTLSKTQFK) and 413 to 426 (SPAS…QRTG). Disordered stretches follow at residues 175–194 (RKTL…STKR) and 404–451 (IPLQ…NKHA). Basic and acidic residues predominate over residues 437 to 451 (PERDSFRHIESNKHA).

Belongs to the RxLR effector family.

Its subcellular location is the secreted. The protein resides in the host nucleus. Functionally, secreted effector that acts as an elicitor that induces cell death in host plant cells. The chain is Secreted RxLR effector protein 111 from Plasmopara viticola (Downy mildew of grapevine).